Reading from the N-terminus, the 454-residue chain is tRNA modification GTPase MnmE (454 aa).

(6S)-5-formyl-5,6,7,8-tetrahydrofolate contacts are provided by Arg-23, Glu-80, and Lys-120. Residues 216-377 enclose the TrmE-type G domain; sequence GMKVVIAGRP…LRDHLKSSMG (162 aa). Asn-226 lines the K(+) pocket. GTP is bound by residues 226-231, 245-251, 270-273, 335-338, and 358-360; these read NAGKSS, TDIAGTT, DTAG, NKAD, and SAR. Ser-230 lines the Mg(2+) pocket. K(+) is bound by residues Thr-245, Ile-247, and Thr-250. Thr-251 is a Mg(2+) binding site. Lys-454 lines the (6S)-5-formyl-5,6,7,8-tetrahydrofolate pocket.

This sequence belongs to the TRAFAC class TrmE-Era-EngA-EngB-Septin-like GTPase superfamily. TrmE GTPase family. In terms of assembly, homodimer. Heterotetramer of two MnmE and two MnmG subunits. The cofactor is K(+).

The protein localises to the cytoplasm. Functionally, exhibits a very high intrinsic GTPase hydrolysis rate. Involved in the addition of a carboxymethylaminomethyl (cmnm) group at the wobble position (U34) of certain tRNAs, forming tRNA-cmnm(5)s(2)U34. The polypeptide is tRNA modification GTPase MnmE (Erwinia tasmaniensis (strain DSM 17950 / CFBP 7177 / CIP 109463 / NCPPB 4357 / Et1/99)).